The sequence spans 510 residues: MNKELVLVVDFGGQYNQLIARRVRENRVYCEIVPYTTSIEDIKEKAPKGIIFTGGPNSVYGENAPRVQKELFDLGIPVLGICYGDQLMAHSLEGEVTSPEKREYGKTDVNLDNSSLLFKDMKEKDQCWMSHTDYISKVPKGFKIIATTDECPCAAMENVEKKLYGVQFHPEVEHTLFGKKMLKNFLFNVCNLKGDWSMSSFAEQQIKAIKEKVGDKKVICALSGGVDSSVAAVIVHKAIGKQLTCIFVDHGLLRKDEGDQVEKIFKDQFDMNLIRVNAQDRFLGKLKGVSDPERKRKIIGEEFIRVFEEEAKKLGNISFLVQGTIYPDIVESGTNTSATIKSHHNVGGLPEDMEFKLIEPLRELFKDEVRAVGEELGIPHKLVWRQPFPGPGLAIRVLGEVTEEKLAITREADAIFREEIAKAGLEEKIWQYFACLPNIQSVGVMGDERTYCHTIALRAVTSSDAMTSDWARIPYEVLDKVSRRIVNEVKEVNRIVYDVTSKPPATIEWE.

In terms of domain architecture, Glutamine amidotransferase type-1 spans 5–195; the sequence is LVLVVDFGGQ…LFNVCNLKGD (191 aa). The active-site Nucleophile is the Cys-82. Catalysis depends on residues His-169 and Glu-171. The GMPS ATP-PPase domain maps to 196–385; that stretch reads WSMSSFAEQQ…LGIPHKLVWR (190 aa). 223–229 is an ATP binding site; it reads SGGVDSS.

In terms of assembly, homodimer.

The catalysed reaction is XMP + L-glutamine + ATP + H2O = GMP + L-glutamate + AMP + diphosphate + 2 H(+). The protein operates within purine metabolism; GMP biosynthesis; GMP from XMP (L-Gln route): step 1/1. Its function is as follows. Catalyzes the synthesis of GMP from XMP. This chain is GMP synthase [glutamine-hydrolyzing], found in Clostridium botulinum (strain Kyoto / Type A2).